The sequence spans 499 residues: Apolipoprotein N-acyltransferase (499 aa).

The next 6 helical transmembrane spans lie at 17 to 37 (VLAG…ALAL), 38 to 58 (LWSA…AVLL), 84 to 104 (ASIW…WAWL), 131 to 151 (IWGL…GVGG), 163 to 183 (LARW…GWWL), and 198 to 218 (RSLL…WSLL). Residues 232–458 (WQPAIPTRSK…EGVGLADLHF (227 aa)) enclose the CN hydrolase domain. E273 serves as the catalytic Proton acceptor. The active site involves K322. C370 functions as the Nucleophile in the catalytic mechanism. A helical transmembrane segment spans residues 474–494 (IGLMLFAVVGLGLSRVRSWLI).

Belongs to the CN hydrolase family. Apolipoprotein N-acyltransferase subfamily.

It is found in the cell inner membrane. The catalysed reaction is N-terminal S-1,2-diacyl-sn-glyceryl-L-cysteinyl-[lipoprotein] + a glycerophospholipid = N-acyl-S-1,2-diacyl-sn-glyceryl-L-cysteinyl-[lipoprotein] + a 2-acyl-sn-glycero-3-phospholipid + H(+). It participates in protein modification; lipoprotein biosynthesis (N-acyl transfer). Functionally, catalyzes the phospholipid dependent N-acylation of the N-terminal cysteine of apolipoprotein, the last step in lipoprotein maturation. This chain is Apolipoprotein N-acyltransferase, found in Prochlorococcus marinus (strain MIT 9313).